Consider the following 496-residue polypeptide: ATP synthase subunit beta, chloroplastic (496 aa).

An ATP-binding site is contributed by 170 to 177; that stretch reads GGAGVGKT.

This sequence belongs to the ATPase alpha/beta chains family. In terms of assembly, F-type ATPases have 2 components, CF(1) - the catalytic core - and CF(0) - the membrane proton channel. CF(1) has five subunits: alpha(3), beta(3), gamma(1), delta(1), epsilon(1). CF(0) has four main subunits: a(1), b(1), b'(1) and c(9-12).

Its subcellular location is the plastid. The protein localises to the chloroplast thylakoid membrane. It catalyses the reaction ATP + H2O + 4 H(+)(in) = ADP + phosphate + 5 H(+)(out). Functionally, produces ATP from ADP in the presence of a proton gradient across the membrane. The catalytic sites are hosted primarily by the beta subunits. This chain is ATP synthase subunit beta, chloroplastic, found in Trachycarpus fortunei (Chinese windmill palm).